Reading from the N-terminus, the 479-residue chain is Cyclin-dependent kinase F-1 (479 aa).

Positions 24-419 constitute a Protein kinase domain; the sequence is YEVLGRAGSG…AADLLNDPYF (396 aa). ATP-binding positions include 30–38 and Lys53; that span reads AGSGAYADV. The Proton acceptor role is filled by Asp146. The residue at position 291 (Thr291) is a Phosphothreonine. Residues 429–479 are disordered; the sequence is EGLQVPESKDEDDDSTEEWANFRGGDSDSDFDEFGSMDVTKTDKGFSIRFS. Residues 468-479 are compositionally biased toward basic and acidic residues; that stretch reads TKTDKGFSIRFS.

Belongs to the protein kinase superfamily. CMGC Ser/Thr protein kinase family. CDC2/CDKX subfamily.

It catalyses the reaction L-seryl-[protein] + ATP = O-phospho-L-seryl-[protein] + ADP + H(+). It carries out the reaction L-threonyl-[protein] + ATP = O-phospho-L-threonyl-[protein] + ADP + H(+). The enzyme catalyses [DNA-directed RNA polymerase] + ATP = phospho-[DNA-directed RNA polymerase] + ADP + H(+). This is Cyclin-dependent kinase F-1 (CDKF-1) from Oryza sativa subsp. japonica (Rice).